We begin with the raw amino-acid sequence, 699 residues long: Ubiquitin-like modifier-activating enzyme atg7 (699 aa).

Residues 370–375 carry the GXGXXG motif motif; that stretch reads GAGTLG. C550 functions as the Glycyl thioester intermediate in the catalytic mechanism. Residues 680 to 699 are disordered; sequence MQWSEDEEGMDEEEGEGELI. A compositionally biased stretch (acidic residues) spans 682-699; the sequence is WSEDEEGMDEEEGEGELI.

The protein belongs to the ATG7 family. As to quaternary structure, homodimer.

Its subcellular location is the cytoplasm. The protein localises to the preautophagosomal structure. In terms of biological role, E1-like activating enzyme involved in the 2 ubiquitin-like systems required for cytoplasm to vacuole transport (Cvt) and autophagy. Activates atg12 for its conjugation with apg-4/atg5 and apg-6/atg8 for its conjugation with phosphatidylethanolamine. Both systems are needed for the apg-6/atg8 association to Cvt vesicles and autophagosomes membranes. Autophagy is essential for maintenance of amino acid levels and protein synthesis under nitrogen starvation. Required for selective autophagic degradation of the nucleus (nucleophagy) as well as for mitophagy which contributes to regulate mitochondrial quantity and quality by eliminating the mitochondria to a basal level to fulfill cellular energy requirements and preventing excess ROS production. Plays a role in the regulation of filamentous growth and chronological longevity. In Neurospora crassa (strain ATCC 24698 / 74-OR23-1A / CBS 708.71 / DSM 1257 / FGSC 987), this protein is Ubiquitin-like modifier-activating enzyme atg7 (apg-5).